Here is a 103-residue protein sequence, read N- to C-terminus: Small ribosomal subunit protein cS23 (103 aa).

This sequence belongs to the chloroplast-specific ribosomal protein cS23 family. In terms of assembly, part of the 30S ribosomal subunit.

It is found in the plastid. Its subcellular location is the chloroplast. In terms of biological role, probably a ribosomal protein or a ribosome-associated protein. The chain is Small ribosomal subunit protein cS23 (ycf65) from Euglena granulata.